A 565-amino-acid chain; its full sequence is Glycine/sarcosine/dimethylglycine N-methyltransferase (565 aa).

The span at 1–10 (MTKSVDDLAR) shows a compositional bias: basic and acidic residues. Residues 1 to 34 (MTKSVDDLARGDQAGDEQDPVHREQQTFGDNPLE) are disordered. S-adenosyl-L-methionine is bound by residues Y45, W53, R62, A86, D107, 134–135 (DW), and L152. Positions 154, 187, and 226 each coordinate substrate.

Belongs to the class I-like SAM-binding methyltransferase superfamily. Glycine N-methyltransferase family. As to quaternary structure, monomer.

The enzyme catalyses glycine + 2 S-adenosyl-L-methionine = N,N-dimethylglycine + 2 S-adenosyl-L-homocysteine + 2 H(+). It carries out the reaction sarcosine + 2 S-adenosyl-L-methionine = glycine betaine + 2 S-adenosyl-L-homocysteine + 2 H(+). It catalyses the reaction glycine + S-adenosyl-L-methionine = sarcosine + S-adenosyl-L-homocysteine + H(+). The catalysed reaction is sarcosine + S-adenosyl-L-methionine = N,N-dimethylglycine + S-adenosyl-L-homocysteine + H(+). The enzyme catalyses N,N-dimethylglycine + S-adenosyl-L-methionine = glycine betaine + S-adenosyl-L-homocysteine + H(+). It functions in the pathway amine and polyamine biosynthesis; betaine biosynthesis via glycine pathway; betaine from glycine: step 1/3. Its pathway is amine and polyamine biosynthesis; betaine biosynthesis via glycine pathway; betaine from glycine: step 2/3. It participates in amine and polyamine biosynthesis; betaine biosynthesis via glycine pathway; betaine from glycine: step 3/3. In terms of biological role, catalyzes the methylation of glycine, sarcosine and dimethylglycine to sarcosine, dimethylglycine and betaine, respectively, with S-adenosylmethionine (AdoMet) acting as the methyl donor. Shows low level of activity on glycine when expressed in E.coli. In Actinopolyspora halophila, this protein is Glycine/sarcosine/dimethylglycine N-methyltransferase.